The chain runs to 113 residues: Large ribosomal subunit protein uL22 (113 aa).

This sequence belongs to the universal ribosomal protein uL22 family. As to quaternary structure, part of the 50S ribosomal subunit.

Functionally, this protein binds specifically to 23S rRNA; its binding is stimulated by other ribosomal proteins, e.g. L4, L17, and L20. It is important during the early stages of 50S assembly. It makes multiple contacts with different domains of the 23S rRNA in the assembled 50S subunit and ribosome. The globular domain of the protein is located near the polypeptide exit tunnel on the outside of the subunit, while an extended beta-hairpin is found that lines the wall of the exit tunnel in the center of the 70S ribosome. The sequence is that of Large ribosomal subunit protein uL22 from Carboxydothermus hydrogenoformans (strain ATCC BAA-161 / DSM 6008 / Z-2901).